Reading from the N-terminus, the 61-residue chain is Delta-actitoxin-Avd2c (61 aa).

Positions 1–20 (MMNRLLVFLMLGAFMLVVSA) are cleaved as a signal peptide. A propeptide spanning residues 21–31 (NDAYGGDESLG) is cleaved from the precursor. 3 disulfide bridges follow: cysteine 36-cysteine 51, cysteine 37-cysteine 45, and cysteine 39-cysteine 56.

It belongs to the sea anemone short toxin (type III) family.

It localises to the secreted. Its subcellular location is the nematocyst. Functionally, sodium channel inhibitor. 5 uM completely inhibits voltage-gated sodium channel (Nav) inactivation. In Anemonia viridis (Snakelocks anemone), this protein is Delta-actitoxin-Avd2c.